Consider the following 156-residue polypeptide: Small ribosomal subunit protein bS16 (156 aa).

Low complexity predominate over residues 124–135 (AAKAAEAETPAE). The segment at 124-156 (AAKAAEAETPAEVQHDDEKVELADVEESAPESV) is disordered. Over residues 136–145 (VQHDDEKVEL) the composition is skewed to basic and acidic residues. The segment covering 146 to 156 (ADVEESAPESV) has biased composition (acidic residues).

Belongs to the bacterial ribosomal protein bS16 family.

The chain is Small ribosomal subunit protein bS16 from Bifidobacterium animalis subsp. lactis (strain AD011).